The primary structure comprises 339 residues: Beta-ketoacyl-[acyl-carrier-protein] synthase III (339 aa).

Active-site residues include Cys121 and His257. The tract at residues 258–262 (QANLR) is ACP-binding. Asn288 is a catalytic residue.

This sequence belongs to the thiolase-like superfamily. FabH family. Homodimer.

Its subcellular location is the cytoplasm. The catalysed reaction is malonyl-[ACP] + propanoyl-CoA + H(+) = 3-oxopentanoyl-[ACP] + CO2 + CoA. The enzyme catalyses 2-methylpropanoyl-CoA + malonyl-[ACP] + H(+) = 4-methyl-3-oxopentanoyl-[ACP] + CO2 + CoA. It carries out the reaction malonyl-[ACP] + acetyl-CoA + H(+) = 3-oxobutanoyl-[ACP] + CO2 + CoA. It catalyses the reaction butanoyl-CoA + malonyl-[ACP] + H(+) = 3-oxohexanoyl-[ACP] + CO2 + CoA. Its pathway is lipid metabolism; fatty acid biosynthesis. Functionally, catalyzes the condensation reaction of fatty acid synthesis by the addition to an acyl acceptor of two carbons from malonyl-ACP. Catalyzes the first condensation reaction which initiates fatty acid synthesis and may therefore play a role in governing the total rate of fatty acid production. Possesses both acetoacetyl-ACP synthase and acetyl transacylase activities. Propionyl-CoA and isobutyryl-CoA were the two most preferred substrates, although acetyl-CoA and butyryl-CoA could also be accepted and elongated. Involved in the biosynthesis of R1128 polyketide. The polypeptide is Beta-ketoacyl-[acyl-carrier-protein] synthase III (Streptomyces lividans).